The chain runs to 227 residues: Cytochrome c oxidase subunit 2 (227 aa).

Topologically, residues 1-14 (MAYPFQLGLQDATS) are mitochondrial intermembrane. Residues 15–45 (PIMEELTNFHDHTLMIVFLISSLVLYIISLM) traverse the membrane as a helical segment. Topologically, residues 46-59 (LTTKLTHTSTMDAQ) are mitochondrial matrix. Residues 60 to 87 (EVETIWTILPAVILILIALPSLRILYMM) traverse the membrane as a helical segment. The Mitochondrial intermembrane segment spans residues 88-227 (DEINNPVLTV…YFENWSASMI (140 aa)). Cu cation-binding residues include histidine 161, cysteine 196, glutamate 198, cysteine 200, histidine 204, and methionine 207. Glutamate 198 is a Mg(2+) binding site. The residue at position 218 (tyrosine 218) is a Phosphotyrosine.

This sequence belongs to the cytochrome c oxidase subunit 2 family. In terms of assembly, component of the cytochrome c oxidase (complex IV, CIV), a multisubunit enzyme composed of 14 subunits. The complex is composed of a catalytic core of 3 subunits MT-CO1, MT-CO2 and MT-CO3, encoded in the mitochondrial DNA, and 11 supernumerary subunits COX4I, COX5A, COX5B, COX6A, COX6B, COX6C, COX7A, COX7B, COX7C, COX8 and NDUFA4, which are encoded in the nuclear genome. The complex exists as a monomer or a dimer and forms supercomplexes (SCs) in the inner mitochondrial membrane with NADH-ubiquinone oxidoreductase (complex I, CI) and ubiquinol-cytochrome c oxidoreductase (cytochrome b-c1 complex, complex III, CIII), resulting in different assemblies (supercomplex SCI(1)III(2)IV(1) and megacomplex MCI(2)III(2)IV(2)). Found in a complex with TMEM177, COA6, COX18, COX20, SCO1 and SCO2. Interacts with TMEM177 in a COX20-dependent manner. Interacts with COX20. Interacts with COX16. Cu cation is required as a cofactor.

The protein localises to the mitochondrion inner membrane. It carries out the reaction 4 Fe(II)-[cytochrome c] + O2 + 8 H(+)(in) = 4 Fe(III)-[cytochrome c] + 2 H2O + 4 H(+)(out). Functionally, component of the cytochrome c oxidase, the last enzyme in the mitochondrial electron transport chain which drives oxidative phosphorylation. The respiratory chain contains 3 multisubunit complexes succinate dehydrogenase (complex II, CII), ubiquinol-cytochrome c oxidoreductase (cytochrome b-c1 complex, complex III, CIII) and cytochrome c oxidase (complex IV, CIV), that cooperate to transfer electrons derived from NADH and succinate to molecular oxygen, creating an electrochemical gradient over the inner membrane that drives transmembrane transport and the ATP synthase. Cytochrome c oxidase is the component of the respiratory chain that catalyzes the reduction of oxygen to water. Electrons originating from reduced cytochrome c in the intermembrane space (IMS) are transferred via the dinuclear copper A center (CU(A)) of subunit 2 and heme A of subunit 1 to the active site in subunit 1, a binuclear center (BNC) formed by heme A3 and copper B (CU(B)). The BNC reduces molecular oxygen to 2 water molecules using 4 electrons from cytochrome c in the IMS and 4 protons from the mitochondrial matrix. In Rattus norvegicus (Rat), this protein is Cytochrome c oxidase subunit 2.